A 384-amino-acid chain; its full sequence is Dual-specificity RNA methyltransferase RlmN (384 aa).

The Proton acceptor role is filled by glutamate 93. Residues glutamate 99 to aspartate 339 enclose the Radical SAM core domain. A disulfide bridge connects residues cysteine 106 and cysteine 344. Positions 113, 117, and 120 each coordinate [4Fe-4S] cluster. S-adenosyl-L-methionine is bound by residues glycine 170 to glutamate 171, serine 202, serine 224 to histidine 226, and asparagine 301. Cysteine 344 (S-methylcysteine intermediate) is an active-site residue.

The protein belongs to the radical SAM superfamily. RlmN family. Requires [4Fe-4S] cluster as cofactor.

It localises to the cytoplasm. The catalysed reaction is adenosine(2503) in 23S rRNA + 2 reduced [2Fe-2S]-[ferredoxin] + 2 S-adenosyl-L-methionine = 2-methyladenosine(2503) in 23S rRNA + 5'-deoxyadenosine + L-methionine + 2 oxidized [2Fe-2S]-[ferredoxin] + S-adenosyl-L-homocysteine. It catalyses the reaction adenosine(37) in tRNA + 2 reduced [2Fe-2S]-[ferredoxin] + 2 S-adenosyl-L-methionine = 2-methyladenosine(37) in tRNA + 5'-deoxyadenosine + L-methionine + 2 oxidized [2Fe-2S]-[ferredoxin] + S-adenosyl-L-homocysteine. Its function is as follows. Specifically methylates position 2 of adenine 2503 in 23S rRNA and position 2 of adenine 37 in tRNAs. m2A2503 modification seems to play a crucial role in the proofreading step occurring at the peptidyl transferase center and thus would serve to optimize ribosomal fidelity. This is Dual-specificity RNA methyltransferase RlmN from Cupriavidus metallidurans (strain ATCC 43123 / DSM 2839 / NBRC 102507 / CH34) (Ralstonia metallidurans).